We begin with the raw amino-acid sequence, 63 residues long: MPKMKTVRGAAKRFKVGKNKIKRGSAFRSHILTKKPSKRMRDLRGPHYVDGTNVSAVKKMLGV.

It belongs to the bacterial ribosomal protein bL35 family.

The sequence is that of Large ribosomal subunit protein bL35 from Campylobacter curvus (strain 525.92).